The sequence spans 430 residues: Glutamine synthetase, chloroplastic/mitochondrial (430 aa).

The N-terminal 45 residues, 1–45 (MAQILAASPTCQMRVPKHSSVIASSSKLWSSVVLKQKKQSNNKVR), are a transit peptide targeting the chloroplast and mitochondrion. A GS beta-grasp domain is found at 77 to 157 (IIAEYIWIGG…VICDTWTPAG (81 aa)). The tract at residues 97 to 122 (TIEKPVEDPSELPKWNYDGSSTGQAP) is disordered. Position 106 is a phosphoserine (Ser-106). A GS catalytic domain is found at 161-430 (PTNKRAKAAE…LAAQKLSLNV (270 aa)).

The protein belongs to the glutamine synthetase family. As to quaternary structure, homooctamer. As to expression, expressed in mesophyll and epidermal cells of leaves.

The protein localises to the plastid. The protein resides in the chloroplast. It localises to the mitochondrion. It carries out the reaction L-glutamate + NH4(+) + ATP = L-glutamine + ADP + phosphate + H(+). Its function is as follows. The light-modulated chloroplast/mitochondrial enzyme, encoded by a nuclear gene and expressed primarily in leaves, is responsible for the reassimilation of the ammonia generated by photorespiration. The chain is Glutamine synthetase, chloroplastic/mitochondrial (GLN2) from Arabidopsis thaliana (Mouse-ear cress).